The primary structure comprises 122 residues: Basic phospholipase A2 homolog Gln49-PLA2 (122 aa).

7 disulfides stabilise this stretch: Cys26-Cys115, Cys28-Cys44, Cys43-Cys95, Cys49-Cys122, Cys50-Cys88, Cys57-Cys81, and Cys75-Cys86.

The protein belongs to the phospholipase A2 family. Group II subfamily. Q49 sub-subfamily. Monomer. Expressed by the venom gland.

The protein resides in the secreted. Functionally, snake venom phospholipase A2 (PLA2) homolog that shows local myotoxicity, apparent anticoagulant activity, and neurotoxicity. Shows analgesic effect on mice due to a decrease of action potentials and nerve conduction velocity. These effects are caused by inhibition of voltage-gated ion channels (potassium (Kv) and sodium (Nav)). In addition, analgesic effects are antagonized by naloxone, implying the mechanism of action is correlated with opioid receptors (probably indirectly). Does not show detectable PLA2 activity on egg yolk phospholipids. The chain is Basic phospholipase A2 homolog Gln49-PLA2 from Gloydius ussuriensis (Ussuri mamushi).